The primary structure comprises 362 residues: uncharacterized protein (362 aa).

Disordered stretches follow at residues 1–117, 153–172, and 210–266; these read MASK…GLNR, SSAPGTSASTSGSPSVGIRK, and RHFD…SSSN. A compositionally biased stretch (basic and acidic residues) spans 12–23; it reads AKKEKEIKKEIE. The span at 51 to 70 shows a compositional bias: acidic residues; it reads ENDDTDGDGKEEDAQKEDDI. 3 stretches are compositionally biased toward low complexity: residues 100 to 112, 153 to 167, and 241 to 265; these read NSPPSESSSTRNT, SSAPGTSASTSGSPS, and VPPSAVSPAPGSGSSASSGTSTSSS.

This is an uncharacterized protein from Caenorhabditis elegans.